Consider the following 325-residue polypeptide: NADH-quinone oxidoreductase subunit H (325 aa).

9 consecutive transmembrane segments (helical) span residues 11-31, 50-69, 81-101, 114-134, 154-174, 186-206, 237-257, 265-285, and 304-324; these read ILLTVLKAVVILLVVVTCGAF, SRVGWGGSLQLVADMIKMFF, LIFTLAPMIAFCSLLLSFAIV, IGILFFLMMAGLAVYAVLFAG, LSYEVFLGLSLMGVVAQAGSF, LWNIIPQFFGFLTFIIAGVAV, FFVGEYIGIVTISALIVTLFF, LPPFIWFAIKTAFFMVMFILV, and ICLPLTLINLLVTAAVILYHA.

It belongs to the complex I subunit 1 family. NDH-1 is composed of 13 different subunits. Subunits NuoA, H, J, K, L, M, N constitute the membrane sector of the complex.

It is found in the cell inner membrane. The catalysed reaction is a quinone + NADH + 5 H(+)(in) = a quinol + NAD(+) + 4 H(+)(out). Functionally, NDH-1 shuttles electrons from NADH, via FMN and iron-sulfur (Fe-S) centers, to quinones in the respiratory chain. The immediate electron acceptor for the enzyme in this species is believed to be ubiquinone. Couples the redox reaction to proton translocation (for every two electrons transferred, four hydrogen ions are translocated across the cytoplasmic membrane), and thus conserves the redox energy in a proton gradient. This subunit may bind ubiquinone. This is NADH-quinone oxidoreductase subunit H from Edwardsiella ictaluri (strain 93-146).